Consider the following 955-residue polypeptide: 2-oxoglutarate dehydrogenase E1 component (955 aa).

It belongs to the alpha-ketoglutarate dehydrogenase family. Homodimer. Part of the 2-oxoglutarate dehydrogenase (OGDH) complex composed of E1 (2-oxoglutarate dehydrogenase), E2 (dihydrolipoamide succinyltransferase) and E3 (dihydrolipoamide dehydrogenase); the complex contains multiple copies of the three enzymatic components (E1, E2 and E3). Thiamine diphosphate serves as cofactor.

It carries out the reaction N(6)-[(R)-lipoyl]-L-lysyl-[protein] + 2-oxoglutarate + H(+) = N(6)-[(R)-S(8)-succinyldihydrolipoyl]-L-lysyl-[protein] + CO2. Functionally, E1 component of the 2-oxoglutarate dehydrogenase (OGDH) complex which catalyzes the decarboxylation of 2-oxoglutarate, the first step in the conversion of 2-oxoglutarate to succinyl-CoA and CO(2). In Bacillus cereus (strain 03BB102), this protein is 2-oxoglutarate dehydrogenase E1 component.